We begin with the raw amino-acid sequence, 552 residues long: Chaperonin GroEL (552 aa).

ATP contacts are provided by residues 30–33 (TLGP), Lys-51, 87–91 (DGTTT), Gly-415, 480–482 (NAA), and Asp-496.

The protein belongs to the chaperonin (HSP60) family. As to quaternary structure, forms a cylinder of 14 subunits composed of two heptameric rings stacked back-to-back. Interacts with the co-chaperonin GroES.

It is found in the cytoplasm. The catalysed reaction is ATP + H2O + a folded polypeptide = ADP + phosphate + an unfolded polypeptide.. Its function is as follows. Together with its co-chaperonin GroES, plays an essential role in assisting protein folding. The GroEL-GroES system forms a nano-cage that allows encapsulation of the non-native substrate proteins and provides a physical environment optimized to promote and accelerate protein folding. This Coxiella burnetii (strain RSA 493 / Nine Mile phase I) protein is Chaperonin GroEL.